Reading from the N-terminus, the 241-residue chain is Small ribosomal subunit protein uS2 (241 aa).

The protein belongs to the universal ribosomal protein uS2 family.

The sequence is that of Small ribosomal subunit protein uS2 from Pectobacterium atrosepticum (strain SCRI 1043 / ATCC BAA-672) (Erwinia carotovora subsp. atroseptica).